A 236-amino-acid chain; its full sequence is Probable pseudouridine-5'-phosphatase YKL033W-A (236 aa).

The protein belongs to the HAD-like hydrolase superfamily.

It catalyses the reaction XMP + H2O = xanthosine + phosphate. The enzyme catalyses psi-UMP + H2O = pseudouridine + phosphate. Its function is as follows. Nucleotidase with XMP as the best in vitro substrate. Low catalytic efficiencies of YKL033W-A observed with XMP and other substrates suggest that these could be secondary activities for this protein, and its primary substrate is not yet identified. May possess pseudouridine 5'-phosphatase activity and together with dTTP/UTP pyrophosphatase YOR111W might constitute a pathway for the detoxification of pseudouridine 5'-triphosphate (Psi-UTP) and -monophosphate (Psi-UMP). The chain is Probable pseudouridine-5'-phosphatase YKL033W-A from Saccharomyces cerevisiae (strain ATCC 204508 / S288c) (Baker's yeast).